A 507-amino-acid polypeptide reads, in one-letter code: ATP synthase subunit alpha, chloroplastic (507 aa).

170–177 (GDRQTGKT) is a binding site for ATP.

This sequence belongs to the ATPase alpha/beta chains family. F-type ATPases have 2 components, CF(1) - the catalytic core - and CF(0) - the membrane proton channel. CF(1) has five subunits: alpha(3), beta(3), gamma(1), delta(1), epsilon(1). CF(0) has four main subunits: a, b, b' and c.

The protein localises to the plastid. It is found in the chloroplast thylakoid membrane. It carries out the reaction ATP + H2O + 4 H(+)(in) = ADP + phosphate + 5 H(+)(out). In terms of biological role, produces ATP from ADP in the presence of a proton gradient across the membrane. The alpha chain is a regulatory subunit. In Chloranthus spicatus (Chulantree), this protein is ATP synthase subunit alpha, chloroplastic.